The following is an 83-amino-acid chain: Cytochrome b559 subunit alpha (83 aa).

The helical transmembrane segment at 21–35 (VIHSITIPSLFIAGW) threads the bilayer. Residue His-23 participates in heme binding.

Belongs to the PsbE/PsbF family. As to quaternary structure, heterodimer of an alpha subunit and a beta subunit. PSII is composed of 1 copy each of membrane proteins PsbA, PsbB, PsbC, PsbD, PsbE, PsbF, PsbH, PsbI, PsbJ, PsbK, PsbL, PsbM, PsbT, PsbX, PsbY, PsbZ, Psb30/Ycf12, at least 3 peripheral proteins of the oxygen-evolving complex and a large number of cofactors. It forms dimeric complexes. The cofactor is heme b.

Its subcellular location is the plastid. It is found in the chloroplast thylakoid membrane. Functionally, this b-type cytochrome is tightly associated with the reaction center of photosystem II (PSII). PSII is a light-driven water:plastoquinone oxidoreductase that uses light energy to abstract electrons from H(2)O, generating O(2) and a proton gradient subsequently used for ATP formation. It consists of a core antenna complex that captures photons, and an electron transfer chain that converts photonic excitation into a charge separation. The polypeptide is Cytochrome b559 subunit alpha (Pinus koraiensis (Korean pine)).